We begin with the raw amino-acid sequence, 602 residues long: Elongation factor 4 (602 aa).

A tr-type G domain is found at Asp-6–Lys-188. Residues Asp-18 to Thr-23 and Asn-135 to Asp-138 each bind GTP.

This sequence belongs to the TRAFAC class translation factor GTPase superfamily. Classic translation factor GTPase family. LepA subfamily.

The protein resides in the cell inner membrane. It catalyses the reaction GTP + H2O = GDP + phosphate + H(+). Its function is as follows. Required for accurate and efficient protein synthesis under certain stress conditions. May act as a fidelity factor of the translation reaction, by catalyzing a one-codon backward translocation of tRNAs on improperly translocated ribosomes. Back-translocation proceeds from a post-translocation (POST) complex to a pre-translocation (PRE) complex, thus giving elongation factor G a second chance to translocate the tRNAs correctly. Binds to ribosomes in a GTP-dependent manner. This chain is Elongation factor 4, found in Brucella anthropi (strain ATCC 49188 / DSM 6882 / CCUG 24695 / JCM 21032 / LMG 3331 / NBRC 15819 / NCTC 12168 / Alc 37) (Ochrobactrum anthropi).